The following is a 170-amino-acid chain: Elicitin-like protein 1 (170 aa).

The first 19 residues, 1–19 (MFSKTLVVLAAVAAVTVNG), serve as a signal peptide directing secretion. Intrachain disulfides connect Cys-25/Cys-91, Cys-47/Cys-76, and Cys-71/Cys-118. Positions 122–170 (GGGSTPTTAPPTSTTPTTAPPTGTTPTTAPPAGTTPGVTPSPTTPKPAC) are disordered. Low complexity predominate over residues 126–162 (TPTTAPPTSTTPTTAPPTGTTPTTAPPAGTTPGVTPS).

The protein belongs to the elicitin family.

The protein localises to the secreted. Functionally, induces local and distal defense responses (incompatible hypersensitive reaction) in plants from the solanaceae and cruciferae families. Elicits leaf necrosis and causes the accumulation of pathogenesis-related proteins. Might interact with the lipidic molecules of the plasma membrane. The sequence is that of Elicitin-like protein 1 (POD-1) from Pythium oligandrum (Mycoparasitic fungus).